We begin with the raw amino-acid sequence, 270 residues long: 4-hydroxy-tetrahydrodipicolinate reductase (270 aa).

NAD(+) is bound by residues 11-16 (GASGRM) and Glu37. Arg38 contacts NADP(+). NAD(+) contacts are provided by residues 101–103 (GTT) and 125–128 (SPNM). His158 acts as the Proton donor/acceptor in catalysis. His159 is a binding site for (S)-2,3,4,5-tetrahydrodipicolinate. Lys162 serves as the catalytic Proton donor. Position 168–169 (168–169 (GT)) interacts with (S)-2,3,4,5-tetrahydrodipicolinate.

This sequence belongs to the DapB family.

The protein localises to the cytoplasm. It carries out the reaction (S)-2,3,4,5-tetrahydrodipicolinate + NAD(+) + H2O = (2S,4S)-4-hydroxy-2,3,4,5-tetrahydrodipicolinate + NADH + H(+). It catalyses the reaction (S)-2,3,4,5-tetrahydrodipicolinate + NADP(+) + H2O = (2S,4S)-4-hydroxy-2,3,4,5-tetrahydrodipicolinate + NADPH + H(+). It functions in the pathway amino-acid biosynthesis; L-lysine biosynthesis via DAP pathway; (S)-tetrahydrodipicolinate from L-aspartate: step 4/4. Functionally, catalyzes the conversion of 4-hydroxy-tetrahydrodipicolinate (HTPA) to tetrahydrodipicolinate. This chain is 4-hydroxy-tetrahydrodipicolinate reductase, found in Shewanella denitrificans (strain OS217 / ATCC BAA-1090 / DSM 15013).